The sequence spans 116 residues: Cation channel sperm-associated auxiliary subunit TMEM262 (116 aa).

The Cytoplasmic portion of the chain corresponds to 1-16; that stretch reads MWLQDRIATFFFPKGM. Residues 17–38 traverse the membrane as a helical segment; sequence MLTTAALMLFFLHLGIFIRDVH. Over 39 to 51 the chain is Extracellular; that stretch reads NFCITYHYDHMSF. Residues 52 to 72 form a helical membrane-spanning segment; it reads HYTVVLMFSQVISICWAAMGS. Residues 73-84 are Cytoplasmic-facing; that stretch reads LYAEMTENKYVC. A helical transmembrane segment spans residues 85–107; that stretch reads FSALTILMLNGAMFFNRLSLEFL. The Extracellular portion of the chain corresponds to 108 to 116; the sequence is AIEYREEHH.

As to quaternary structure, component of the CatSper complex or CatSpermasome composed of the core pore-forming members CATSPER1, CATSPER2, CATSPER3 and CATSPER4 as well as auxiliary members CATSPERB, CATSPERG, CATSPERD, CATSPERE, CATSPERZ, C2CD6/CATSPERT, TMEM249, TMEM262 and EFCAB9. HSPA1 may be an additional auxiliary complex member. The core complex members CATSPER1, CATSPER2, CATSPER3 and CATSPER4 form a heterotetrameric channel. The auxiliary CATSPERB, CATSPERG, CATSPERD and CATSPERE subunits form a pavilion-like structure over the pore which stabilizes the complex through interactions with CATSPER4, CATSPER3, CATSPER1 and CATSPER2 respectively. TMEM262/CATSPERH interacts with CATSPERB, further stabilizing the complex. C2CD6/CATSPERT interacts at least with CATSPERD and is required for targeting the CatSper complex in the flagellar membrane.

It localises to the cell projection. Its subcellular location is the cilium. It is found in the flagellum membrane. Functionally, auxiliary component of the CatSper complex, a complex involved in sperm cell hyperactivation. The sequence is that of Cation channel sperm-associated auxiliary subunit TMEM262 from Homo sapiens (Human).